The following is a 282-amino-acid chain: Epoxide hydrolase LasB (282 aa).

A lsd19A region spans residues M1–A133. Residue Y14 coordinates substrate. D38 (proton acceptor; for 5-exo epoxide-opening cyclization activity) is an active-site residue. Residues E65 and H146 each coordinate substrate. Residues P134–A282 form a lsd19B region. D170 acts as the Proton acceptor; for 6-endo epoxide-opening cyclization activity in catalysis. The substrate site is built by R177, E197, and Y251.

Its function is as follows. Epoxide hydrolase responsible for the double epoxide-opening cyclization of bisepoxyprelasalocid A to form lasalocid A, a polyether antibiotic. In vitro, accepts various substrate analogs differing in the left segment of lasalocid and epoxide stereochemistry to afford products with excellent regioselectivity. The polypeptide is Epoxide hydrolase LasB (lsd19) (Streptomyces lasalocidi (Streptomyces lasaliensis)).